The sequence spans 205 residues: dITP/XTP pyrophosphatase (205 aa).

10–15 is a substrate binding site; the sequence is TKNEGK. 2 residues coordinate Mg(2+): Glu44 and Asp73. The Proton acceptor role is filled by Asp73. Substrate contacts are provided by residues Ser74, 156–159, Lys179, and 184–185; these read FGYD and HR.

This sequence belongs to the HAM1 NTPase family. Homodimer. Mg(2+) serves as cofactor.

The catalysed reaction is XTP + H2O = XMP + diphosphate + H(+). The enzyme catalyses dITP + H2O = dIMP + diphosphate + H(+). It carries out the reaction ITP + H2O = IMP + diphosphate + H(+). Pyrophosphatase that catalyzes the hydrolysis of nucleoside triphosphates to their monophosphate derivatives, with a high preference for the non-canonical purine nucleotides XTP (xanthosine triphosphate), dITP (deoxyinosine triphosphate) and ITP. Seems to function as a house-cleaning enzyme that removes non-canonical purine nucleotides from the nucleotide pool, thus preventing their incorporation into DNA/RNA and avoiding chromosomal lesions. This Dictyoglomus thermophilum (strain ATCC 35947 / DSM 3960 / H-6-12) protein is dITP/XTP pyrophosphatase.